Reading from the N-terminus, the 337-residue chain is 4-hydroxyproline 2-epimerase (337 aa).

Cys91 acts as the Proton acceptor in catalysis. Substrate contacts are provided by residues 92–93 (GH), Asp252, and 257–258 (GT).

It belongs to the proline racemase family.

It carries out the reaction trans-4-hydroxy-L-proline = cis-4-hydroxy-D-proline. In terms of biological role, catalyzes the epimerization of trans-4-hydroxy-L-proline (t4LHyp) to cis-4-hydroxy-D-proline (c4DHyp). Is involved in a degradation pathway that converts t4LHyp to alpha-ketoglutarate, which allows R.sphaeroides to grow on t4LHyp as a sole carbon source. Displays no proline racemase activity. The sequence is that of 4-hydroxyproline 2-epimerase from Cereibacter sphaeroides (strain ATCC 17023 / DSM 158 / JCM 6121 / CCUG 31486 / LMG 2827 / NBRC 12203 / NCIMB 8253 / ATH 2.4.1.) (Rhodobacter sphaeroides).